The primary structure comprises 187 residues: Large ribosomal subunit protein uL24c (187 aa).

Residues 1-41 constitute a chloroplast transit peptide; it reads MAALQSSFAGLSTSFFGQRFSPPLSLPPLVKSTEGPCLIQA.

It belongs to the universal ribosomal protein uL24 family. As to quaternary structure, part of the 50S ribosomal subunit.

The protein resides in the plastid. It localises to the chloroplast. Its function is as follows. One of two assembly initiator proteins, it binds directly to the 5'-end of the 23S rRNA, where it nucleates assembly of the 50S subunit. This is Large ribosomal subunit protein uL24c (RPL24) from Nicotiana tabacum (Common tobacco).